A 298-amino-acid chain; its full sequence is Glutamyl-Q tRNA(Asp) synthetase (298 aa).

L-glutamate-binding positions include 8 to 12 and Glu-44; that span reads RFAPS. The 'HIGH' region motif lies at 11-21; sequence PSPTGPLHFGS. Positions 100, 102, 123, and 127 each coordinate Zn(2+). Positions 183 and 201 each coordinate L-glutamate. A 'KMSKS' region motif is present at residues 239-243; the sequence is KLSKQ. Residue Lys-242 participates in ATP binding.

Belongs to the class-I aminoacyl-tRNA synthetase family. GluQ subfamily. It depends on Zn(2+) as a cofactor.

Catalyzes the tRNA-independent activation of glutamate in presence of ATP and the subsequent transfer of glutamate onto a tRNA(Asp). Glutamate is transferred on the 2-amino-5-(4,5-dihydroxy-2-cyclopenten-1-yl) moiety of the queuosine in the wobble position of the QUC anticodon. The chain is Glutamyl-Q tRNA(Asp) synthetase from Burkholderia cenocepacia (strain ATCC BAA-245 / DSM 16553 / LMG 16656 / NCTC 13227 / J2315 / CF5610) (Burkholderia cepacia (strain J2315)).